A 134-amino-acid polypeptide reads, in one-letter code: TSC22 domain family protein 3 (134 aa).

Met1 is modified (N-acetylmethionine). The segment at 1–60 (MNTEMYQTPMEVAVYQLHNFSISFFSSLLGGDVVSVKLDNSASGASVVAIDNKIEQAMDL) is AP1-binding. Ala42 and Val73 each carry phosphoserine. Residues 76 to 97 (LKEQIRELVEKNSQLERENTLL) are leucine-zipper. At Ser102 the chain carries Phosphoserine. The disordered stretch occupies residues 108–134 (KFQSCLSPEEPAPESPQVPEAPGGSAV).

Belongs to the TSC-22/Dip/Bun family. In terms of assembly, can form homodimers, however it is likely to function as a monomer. Interacts with NFKB1. Interacts (via N-terminus) with JUN and FOS; these interactions inhibit the binding of active AP1 to its target DNA. Interacts with MYOD1. Interacts with HDAC1; this interaction affects HDAC1 activity on MYOG promoter and thus inhibits MYOD1 transcriptional activity. Ubiquitously expressed, including in the fetal brain and liver. Expressed in brain, lung, spleen and skeletal muscle. Lower levels detected in heart and kidney. Not detected in the pancreas. In non-lymphoid tissues, in the absence of inflammation, the major source of constitutive expression is the macrophage lineage. Also expressed in cells from different hemopoietic cell lineages, including bone marrow cells, CD34+ stem cells, mature B- and T-cells, monocytes and granulocytes. Down-regulated in activated macrophages from inflammatory lesions of delayed-type hypersensitivity (DTH) reactions, such as in tuberculosis and in Crohn disease, whereas in Burkitt lymphoma, persists in macrophages involved in the phagocytosis of apoptotic malignant cells.

The protein resides in the cytoplasm. It is found in the nucleus. Its function is as follows. Protects T-cells from IL2 deprivation-induced apoptosis through the inhibition of FOXO3A transcriptional activity that leads to the down-regulation of the pro-apoptotic factor BCL2L11. In macrophages, plays a role in the anti-inflammatory and immunosuppressive effects of glucocorticoids and IL10. In T-cells, inhibits anti-CD3-induced NFKB1 nuclear translocation and thereby NFKB1 DNA-binding activities. In vitro, suppresses AP-1 transcription factor complex DNA-binding activities. In terms of biological role, inhibits myogenic differentiation and mediates anti-myogenic effects of glucocorticoids by binding and regulating MYOD1 and HDAC1 transcriptional activity resulting in reduced expression of MYOG. This is TSC22 domain family protein 3 from Homo sapiens (Human).